We begin with the raw amino-acid sequence, 74 residues long: Ferredoxin-like protein in nif region (74 aa).

The region spanning 2–30 (PFKIIASQCTSCSACEPLCPNVAISEKGG) is the 4Fe-4S ferredoxin-type domain. Residues Cys-10, Cys-13, Cys-16, Cys-20, Cys-39, Cys-51, and Cys-55 each contribute to the [4Fe-4S] cluster site.

[4Fe-4S] cluster serves as cofactor.

The polypeptide is Ferredoxin-like protein in nif region (frxA) (Bradyrhizobium diazoefficiens (strain JCM 10833 / BCRC 13528 / IAM 13628 / NBRC 14792 / USDA 110)).